Here is an 879-residue protein sequence, read N- to C-terminus: MPQKYSTLKNNINMLGHFLGETISDAQGSDILDLIENIRVLSRDSRSGDEKAREKLLDTLSTISNENIIPVARAFSQFLNLTNIAEQYQTISRKHIDQVASDRSLEALFERLKAQNVPAEKVISTVEKLLIELVLTAHPTEVTRRSLLHKYVEINRCLSRLEHDDLTQSESTKLKRRLMQLIALAWHTNEIRTQRPTPVDEAKWGIAVIENSLWKAVPDFCRQLNLHLEKNFGVQHSVNLAPVKFSSWIGGDRDGNPFVTAETTRQVLIMNRWKAAELFLADIQVLSEELSVVHCTEEFRAKYGDHLEPYRVVVKNLRAKLVKTVAYYGEILENKPSTINTNDILTDDQQLWEPLYDCYQSLHQCGMRIIANGILLDCLRRIRCFGLSLSHLDIRQESLRHTKALSEITRYIGLGDYSQWMEDDKQAFLIRELSSRRPLLPRNWTPSPETQEILETCRVIAQQPEGVISCYIISMARTASDVLAVHLLLKEAGVTYYLPVVPLFETLDDLNASKEVMTQLFNVGWYRGVINNKQMVMIGYSDSAKDAGMMAASWAQYRAQEQLVNLCEKMGVELTLFHGRGGTIGRGGAPAHAALLSQPPRSLKNGLRVTEQGEMIRFKLGLPAVAVNSFDLYASAILEANLLPPPEPKESWRAIMNELSDSSCNIYRSVVRGDKDFVPYFRSATPEQELSKLPLGSRPSKRNPNGGVESLRAIPWIFAWMQNRLMLPAWLGASASIRQSIEKGNKETIEEMCKNWPFFSTRIGMLEMVFSKTDTWLSEHYDLNLVKKELWYLGQSLREQLQADIKTILSLSHEDELMSDLPWIAESIALRNIYTDPLNLLQVELLRRLRENPENPNPDVEQALMITITGIAAGMRNTG.

Catalysis depends on residues histidine 138 and lysine 545.

The protein belongs to the PEPCase type 1 family. It depends on Mg(2+) as a cofactor.

It carries out the reaction oxaloacetate + phosphate = phosphoenolpyruvate + hydrogencarbonate. Functionally, forms oxaloacetate, a four-carbon dicarboxylic acid source for the tricarboxylic acid cycle. The chain is Phosphoenolpyruvate carboxylase from Histophilus somni (strain 2336) (Haemophilus somnus).